Consider the following 347-residue polypeptide: MRIEEDLKLGFKDVLIRPKRSTLKSRSEVELERQFTFKHSGLSWSGVPIIAANMDSVGTFSMAEALASFDVLTAVHKHYTLEQWAAFVQRVPASVLRHVMVSTGTSEADFVKMQQILALSPGLKFICIDVANGYSEHFVAFLQKAREACPNHVICAGNVVTGEMVEELILSGADIVKVGIGPGSVCTTRVKTGVGYPQLSAVIECADAAHGLGGQIVSDGGCSVPGDVAKAFGGGADFVMLGGMLAGHDECEGTVVEENGEKFMLFYGMSSESAMKRHVGGVAQYRAAEGKTVKLPLRGEVEFTVRDILGGLRSACTYVGAERLKELTKRTTFIRVAEQENRVFGSN.

108–131 contacts NADP(+); sequence ADFVKMQQILALSPGLKFICIDVA. Positions 181 and 183 each coordinate K(+). The active-site Thioimidate intermediate is the Cys186. 216-239 provides a ligand contact to NADP(+); it reads IVSDGGCSVPGDVAKAFGGGADFV.

This sequence belongs to the IMPDH/GMPR family. GuaC type 1 subfamily. As to quaternary structure, homotetramer.

It carries out the reaction IMP + NH4(+) + NADP(+) = GMP + NADPH + 2 H(+). Its function is as follows. Catalyzes the irreversible NADPH-dependent deamination of GMP to IMP. It functions in the conversion of nucleobase, nucleoside and nucleotide derivatives of G to A nucleotides, and in maintaining the intracellular balance of A and G nucleotides. The protein is GMP reductase of Serratia proteamaculans (strain 568).